The chain runs to 218 residues: Phosphoribosylformylglycinamidine synthase subunit PurQ (218 aa).

The region spanning 2 to 218 (SIAVLRFPGT…GARMLRGLAC (217 aa)) is the Glutamine amidotransferase type-1 domain. The active-site Nucleophile is the Cys86. Catalysis depends on residues His195 and Glu197.

As to quaternary structure, part of the FGAM synthase complex composed of 1 PurL, 1 PurQ and 2 PurS subunits.

Its subcellular location is the cytoplasm. The enzyme catalyses N(2)-formyl-N(1)-(5-phospho-beta-D-ribosyl)glycinamide + L-glutamine + ATP + H2O = 2-formamido-N(1)-(5-O-phospho-beta-D-ribosyl)acetamidine + L-glutamate + ADP + phosphate + H(+). It carries out the reaction L-glutamine + H2O = L-glutamate + NH4(+). It functions in the pathway purine metabolism; IMP biosynthesis via de novo pathway; 5-amino-1-(5-phospho-D-ribosyl)imidazole from N(2)-formyl-N(1)-(5-phospho-D-ribosyl)glycinamide: step 1/2. Functionally, part of the phosphoribosylformylglycinamidine synthase complex involved in the purines biosynthetic pathway. Catalyzes the ATP-dependent conversion of formylglycinamide ribonucleotide (FGAR) and glutamine to yield formylglycinamidine ribonucleotide (FGAM) and glutamate. The FGAM synthase complex is composed of three subunits. PurQ produces an ammonia molecule by converting glutamine to glutamate. PurL transfers the ammonia molecule to FGAR to form FGAM in an ATP-dependent manner. PurS interacts with PurQ and PurL and is thought to assist in the transfer of the ammonia molecule from PurQ to PurL. The sequence is that of Phosphoribosylformylglycinamidine synthase subunit PurQ from Wolinella succinogenes (strain ATCC 29543 / DSM 1740 / CCUG 13145 / JCM 31913 / LMG 7466 / NCTC 11488 / FDC 602W) (Vibrio succinogenes).